Here is a 195-residue protein sequence, read N- to C-terminus: Guanylate kinase (195 aa).

The Guanylate kinase-like domain maps to 7 to 186 (GVLLVLSSPS…SVEEISSILD (180 aa)). An ATP-binding site is contributed by 14–21 (SPSGAGKT).

It belongs to the guanylate kinase family.

It localises to the cytoplasm. It carries out the reaction GMP + ATP = GDP + ADP. In terms of biological role, essential for recycling GMP and indirectly, cGMP. This Wolbachia sp. subsp. Brugia malayi (strain TRS) protein is Guanylate kinase.